A 183-amino-acid polypeptide reads, in one-letter code: dCTP deaminase (183 aa).

DCTP is bound by residues 106-111 (KSTYAR), 130-132 (TLE), glutamine 151, tyrosine 165, and glutamine 175. Glutamate 132 serves as the catalytic Proton donor/acceptor.

This sequence belongs to the dCTP deaminase family. Homotrimer.

It carries out the reaction dCTP + H2O + H(+) = dUTP + NH4(+). It participates in pyrimidine metabolism; dUMP biosynthesis; dUMP from dCTP (dUTP route): step 1/2. Functionally, catalyzes the deamination of dCTP to dUTP. The polypeptide is dCTP deaminase (Acidobacterium capsulatum (strain ATCC 51196 / DSM 11244 / BCRC 80197 / JCM 7670 / NBRC 15755 / NCIMB 13165 / 161)).